We begin with the raw amino-acid sequence, 101 residues long: Integration host factor subunit beta (101 aa).

Residues 57-77 are disordered; that stretch reads PARAGRNPRTGAHVPVDQKSV.

It belongs to the bacterial histone-like protein family. In terms of assembly, heterodimer of an alpha and a beta chain.

This protein is one of the two subunits of integration host factor, a specific DNA-binding protein that functions in genetic recombination as well as in transcriptional and translational control. The polypeptide is Integration host factor subunit beta (Rhodopseudomonas palustris (strain HaA2)).